A 400-amino-acid polypeptide reads, in one-letter code: Probable glycosyltransferase WbjE (400 aa).

The protein belongs to the glycosyltransferase group 1 family. Glycosyltransferase 4 subfamily.

Its pathway is bacterial outer membrane biogenesis; LPS O-antigen biosynthesis. The sequence is that of Probable glycosyltransferase WbjE (wbjE) from Pseudomonas aeruginosa.